Reading from the N-terminus, the 514-residue chain is Contact site A protein (514 aa).

The N-terminal stretch at 1-19 (MKFLLVLIILYNILNSAHS) is a signal peptide. The segment at 20 to 453 (APTITAVSNG…EATTSTTYTI (434 aa)) is globular. The IPT/TIG 1 domain maps to 21–104 (PTITAVSNGK…TGGNGLFKYT (84 aa)). Residues asparagine 128, asparagine 137, asparagine 207, asparagine 294, and asparagine 399 are each glycosylated (N-linked (GlcNAc...) asparagine). Residues 191 to 283 (PTITSITPLA…NQQPITFTYN (93 aa)) enclose the IPT/TIG 2 domain. Composition is skewed to low complexity over residues 446-475 (TTST…TATP) and 483-494 (STPEETEAPSSA). A disordered region spans residues 446–494 (TTSTTYTIPDTPTPTDTATPSPTPTETATPSPTPKPTSTPEETEAPSSA). Repeat copies occupy residues 462-469 (TATPSPTP) and 472-479 (TATPSPTP). Residues 462-479 (TATPSPTPTETATPSPTP) form a 2 X 8 AA repeats, Pro-rich region. Serine 492 is lipidated: GPI-like-anchor amidated serine. Residues 493 to 514 (SATTLISPLSLIVIFISFVLLI) constitute a propeptide, removed in mature form.

In terms of processing, phosphorylated on serine and N-glycosylated with two types of oligosaccharide chains. The GPI-like-anchor contains a phosphoceramide group, rather than a phosphatidyl group.

Its subcellular location is the cell membrane. Functionally, this cell-surface glycoprotein mediates cell-cell binding via homophilic interaction. In Dictyostelium discoideum (Social amoeba), this protein is Contact site A protein (csaA).